The primary structure comprises 405 residues: Prenyltransferase phqA (405 aa).

Tyrosine 195, lysine 262, and glutamine 332 together coordinate dimethylallyl diphosphate.

It belongs to the tryptophan dimethylallyltransferase family.

Its pathway is alkaloid biosynthesis. Functionally, prenyltransferase; part of the gene cluster that mediates the biosynthesis of paraherquamide, a fungal indole alkaloid that belongs to a family of natural products containing a characteristic bicyclo[2.2.2]diazaoctane core. The first steps in the biosynthesis of paraherquamide is the production of the beta-methyl-proline precursor from L-isoleucine. They require oxidation of a terminally hydroxylated L-isoleucine to the corresponding aldehyde by enzymes which have still to be identified. Spontaneous cyclization and dehydration would yield the 4-methyl pyrolline-5-carboxylic acid, which is then reduced by the pyrroline-5-carboxylate reductase phqD leading to the beta-methyl-proline precursor. The next step of paraherquamide biosynthesis involves coupling of beta-methyl-proline and L-tryptophan by the bimodular NRPS phqB, to produce a monooxopiperazine intermediate. The reductase (R) domain of phqB utilizes NADPH for hydride transfer to reduce the thioester bond of the T domain-tethered linear dipeptide to a hemithioaminal intermediate, which spontaneously cleaves the C-S bond to release the aldehyde product. This compound undergoes spontaneous cyclization and dehydration to give a dienamine which is reverse prenylated at C-2 by the reverse prenyltransferase phqJ. The other prenyltransferase present in the cluster, phqI may be a redundant gene in the pathway. During biosynthetic assembly, the key step to produce the polycyclic core is catalyzed by the bifunctional reductase and intramolecular [4+2] Diels-Alderase, phqE, resulting in formation of the [2.2.2] diazaoctane intermediate preparaherquamide. Following formation of preparaherquamide, an indole 2,3-epoxidation-initiated pinacol-like rearrangement is catalyzed by the phqK FAD-dependent monooxygenase. The prenyltransferase phqA, the cytochrome P450 monooxygenase phqL, and the FAD-linked oxidoreductase phqH (or the cytochrome P450 monooxygenase phqM), are proposed to be involved in the formation of the pyran ring. The FAD-dependent monooxygenase phqK is likely responsible for generation of the spiro-oxindole, and the N-methylation is likely mediated by the phqN methyltransferase leading to the isolable natural product paraherquamide F. However, the order of these biosynthetic steps has still to be determined. In late-stage paraherquamide biosynthesis, the third P450 monooxygenase, phqO, is probably responsible for the C-14 hydroxylation, transforming paraherquamide F to paraherquamide G, and paraherquamide E to the final product paraherquamide A. The expansion from the 6-membered ring pyran (in paraherquamides F and G) to the 7-membered dioxepin ring (in paraherquamides A and E) represents a poorly understood but intriguing process that probably involves the 2-oxoglutarate-dependent dioxygenase phqC. Finally, the remaining members of the paraherquamide cluster, including phqI as well as phqM (or phqH), do not have a clearly prescribed role and appear to be redundant. This chain is Prenyltransferase phqA, found in Penicillium fellutanum.